The following is a 219-amino-acid chain: ATP-dependent Clp protease proteolytic subunit (219 aa).

Residues 1–22 (MPVGVPKVPFLNPNPDPEPDSV) form a disordered region. The active-site Nucleophile is the serine 116. Histidine 141 is a catalytic residue.

The protein belongs to the peptidase S14 family. Component of the chloroplastic Clp protease core complex.

It localises to the plastid. It is found in the chloroplast stroma. It catalyses the reaction Hydrolysis of proteins to small peptides in the presence of ATP and magnesium. alpha-casein is the usual test substrate. In the absence of ATP, only oligopeptides shorter than five residues are hydrolyzed (such as succinyl-Leu-Tyr-|-NHMec, and Leu-Tyr-Leu-|-Tyr-Trp, in which cleavage of the -Tyr-|-Leu- and -Tyr-|-Trp bonds also occurs).. In terms of biological role, cleaves peptides in various proteins in a process that requires ATP hydrolysis. Has a chymotrypsin-like activity. Plays a major role in the degradation of misfolded proteins. In Pelargonium hortorum (Common geranium), this protein is ATP-dependent Clp protease proteolytic subunit.